The following is a 437-amino-acid chain: Vasoactive intestinal polypeptide receptor 2 (437 aa).

A signal peptide spans 1–22; the sequence is MRASVVLTCYCWLLVRVSSIHP. Residues 23–123 lie on the Extracellular side of the membrane; it reads ECRFHLEIQE…EDESKITFYI (101 aa). Cystine bridges form between Cys37-Cys60, Cys51-Cys92, and Cys74-Cys108. Residues Asn57, Asn87, and Asn91 are each glycosylated (N-linked (GlcNAc...) asparagine). A helical membrane pass occupies residues 124-149; it reads LVKAIYTLGYSVSLMSLTTGSIIICL. The Cytoplasmic portion of the chain corresponds to 150-157; the sequence is FRKLHCTR. A helical transmembrane segment spans residues 158-179; that stretch reads NYIHLNLFLSFMLRAISVLVKD. Residues 180–202 are Extracellular-facing; sequence SVLYSSSGTLRCHDQPGSWVGCK. Cys201 and Cys270 are disulfide-bonded. The helical transmembrane segment at 203 to 227 threads the bilayer; the sequence is LSLVFFQYCIMANFYWLLVEGLYLH. The Cytoplasmic portion of the chain corresponds to 228–238; that stretch reads TLLVAILPPSR. A helical membrane pass occupies residues 239–260; that stretch reads CFLAYLLIGWGIPSVCIGAWIA. At 261–279 the chain is on the extracellular side; the sequence is TRLSLEDTGCWDTNDHSIP. Residues 280 to 303 traverse the membrane as a helical segment; the sequence is WWVIRMPILISIVVNFALFISIVR. At 304–324 the chain is on the cytoplasmic side; the sequence is ILLQKLTSPDVGGNDQSQYKR. Residues 325-345 traverse the membrane as a helical segment; that stretch reads LAKSTLLLIPLFGVHYMVFAA. Residues 346-353 lie on the Extracellular side of the membrane; it reads FPIGISST. Residues 354–377 form a helical membrane-spanning segment; that stretch reads YQILFELCVGSFQGLVVAVLYCFL. At 378 to 437 the chain is on the cytoplasmic side; sequence NSEVQCELKRRWRGLCLTQPGSRDYRLHSWSMSRNGSESALQIHRGSRTQSFLQSETSVI.

It belongs to the G-protein coupled receptor 2 family. In terms of assembly, interacts with ADCYAP1/PACAP (via N-terminal extracellular domain); activated by PACAP27 and CAPAC38 neuropeptides. Interacts with VIP; the interaction results in VIPR1 activation. As to expression, mainly in the thalamus, hippocampus and in the suprachiasmatic nucleus.

The protein localises to the cell membrane. Functionally, g protein-coupled receptor activated by the neuropeptides vasoactive intestinal peptide (VIP) and pituitary adenylate cyclase-activating polypeptide (ADCYAP1/PACAP). Binds VIP and both PACAP27 and PACAP38 bioactive peptides with the order of ligand affinity of VIP = PACAP38 &gt; PACAP27. Ligand binding causes a conformation change that triggers signaling via guanine nucleotide-binding proteins (G proteins) and modulates the activity of downstream effectors. Activates cAMP-dependent pathway. May be coupled to phospholipase C. The sequence is that of Vasoactive intestinal polypeptide receptor 2 from Rattus norvegicus (Rat).